Here is a 276-residue protein sequence, read N- to C-terminus: Ammonia monooxygenase alpha subunit (276 aa).

Transmembrane regions (helical) follow at residues 29-49 (VYFP…FMLL), 66-86 (PVVT…YLWV), 96-116 (LCVV…FYWW), 123-143 (FVTP…LYLT), and 150-170 (ALVG…PIFG). Cu(+) is bound by residues aspartate 187, histidine 191, and histidine 204. The chain crosses the membrane as a helical span at residues 219 to 239 (VIAAFFSAFVSMLMFTVWWYL).

As to quaternary structure, the soluble ammonia monooxygenase is a nonamer composed of three alpha subunits (AmoA), three beta subunits (AmoB) and three gamma subunits (Cytochrome c1 PetC). Requires Cu(+) as cofactor.

Its subcellular location is the cell membrane. The protein resides in the cytoplasm. The enzyme catalyses AH2 + NH4(+) + O2 = hydroxylamine + A + H2O + H(+). In vitro, inhibited by acetylene. In fact, acetylene is oxidized to ketene which binds irreversibly to His-191 of ammonia monooxygenase alpha subunit (AmoA). Its function is as follows. Part of the ammonia monooxygenase complex, which catalyzes the oxidation of ammonia to hydroxylamine, the first reaction in the process of ammonia oxidation to nitrite. This Nitrosomonas europaea (strain ATCC 19718 / CIP 103999 / KCTC 2705 / NBRC 14298) protein is Ammonia monooxygenase alpha subunit.